A 162-amino-acid polypeptide reads, in one-letter code: Succinate dehydrogenase assembly factor 2, mitochondrial (162 aa).

Residues 1-35 constitute a mitochondrion transit peptide; the sequence is MHNMFPALTKTLSLQGYKIINSQTGSAAWSCGRRW.

It belongs to the SDHAF2 family. In terms of assembly, interacts with the flavoprotein subunit within the SDH catalytic dimer.

It localises to the mitochondrion matrix. Its function is as follows. Plays an essential role in the assembly of succinate dehydrogenase (SDH), an enzyme complex (also referred to as respiratory complex II) that is a component of both the tricarboxylic acid (TCA) cycle and the mitochondrial electron transport chain, and which couples the oxidation of succinate to fumarate with the reduction of ubiquinone (coenzyme Q) to ubiquinol. Required for flavinylation (covalent attachment of FAD) of the flavoprotein subunit of the SDH catalytic dimer. The protein is Succinate dehydrogenase assembly factor 2, mitochondrial of Saccharomyces cerevisiae (strain RM11-1a) (Baker's yeast).